A 123-amino-acid polypeptide reads, in one-letter code: uncharacterized protein (123 aa).

This is an uncharacterized protein from Human cytomegalovirus (strain AD169) (HHV-5).